We begin with the raw amino-acid sequence, 200 residues long: Recombination protein RecR (200 aa).

A C4-type zinc finger spans residues 58-75 (CSNCFCLKISQTSPCNFC). The Toprim domain maps to 82–177 (SSLCIVATPK…KISRLALGMP (96 aa)).

Belongs to the RecR family.

In terms of biological role, may play a role in DNA repair. It seems to be involved in an RecBC-independent recombinational process of DNA repair. It may act with RecF and RecO. This chain is Recombination protein RecR, found in Chlamydia trachomatis serovar L2 (strain ATCC VR-902B / DSM 19102 / 434/Bu).